The sequence spans 417 residues: mRNA cap guanine-N(7) methyltransferase (417 aa).

The region spanning 129 to 412 (SPIIKLRNFN…LYTVFAFKKV (284 aa)) is the mRNA cap 0 methyltransferase domain. 138-139 (NN) provides a ligand contact to mRNA. Residues Lys142, Gly160, Asp182, Asp211, Gln237, and Tyr242 each coordinate S-adenosyl-L-methionine.

Belongs to the class I-like SAM-binding methyltransferase superfamily. mRNA cap 0 methyltransferase family.

Its subcellular location is the nucleus. It carries out the reaction a 5'-end (5'-triphosphoguanosine)-ribonucleoside in mRNA + S-adenosyl-L-methionine = a 5'-end (N(7)-methyl 5'-triphosphoguanosine)-ribonucleoside in mRNA + S-adenosyl-L-homocysteine. Responsible for methylating the 5'-cap structure of mRNAs. This is mRNA cap guanine-N(7) methyltransferase (ABD1) from Candida glabrata (strain ATCC 2001 / BCRC 20586 / JCM 3761 / NBRC 0622 / NRRL Y-65 / CBS 138) (Yeast).